Reading from the N-terminus, the 482-residue chain is MVTTAERTNVGFITQVIGPVIDIEFPSGKMPAIYNALRIQGKNAAGLDVAVTCEVQQLLGDNRVRAVAMSSTDGLVRGMEAVDTGAPISVPVGTATLGRIFNVLGEPVDEKGEVNISETLPIHRPAPSFTELETKPSVFETGIKVIDLLTPYRRGGKIGLFGGAGVGKTVIMMELINNIATQHGGVSVFAGVGERTREGNDLYNEMIESGVIDKDDPSKSKIALVYGQMNEPPGARMRVGLSGLTMAEYFRDVNKQDVLLFVDNIFRFVQAGSEVSALLGRMPSAVGYQPTLGTDVGALQERITSTMEGSITSIQAVYVPADDLTDPAPATTFAHLDGTTVLSRGLAAKGIYPAVDPLGSTSNMLQPDIVGSEHYQTARAVQATLQRYKELQDIIAILGLDELSEEDRLTVARARKVERFLSQPFFVAEVFTGAPGKYVTLEETIKGFQMILSGELDDLPEQAFYMVGNIEEAKAKAEKLKA.

162-169 (GGAGVGKT) lines the ATP pocket.

This sequence belongs to the ATPase alpha/beta chains family. In terms of assembly, F-type ATPases have 2 components, CF(1) - the catalytic core - and CF(0) - the membrane proton channel. CF(1) has five subunits: alpha(3), beta(3), gamma(1), delta(1), epsilon(1). CF(0) has four main subunits: a(1), b(1), b'(1) and c(9-12).

It localises to the cellular thylakoid membrane. The enzyme catalyses ATP + H2O + 4 H(+)(in) = ADP + phosphate + 5 H(+)(out). Produces ATP from ADP in the presence of a proton gradient across the membrane. The catalytic sites are hosted primarily by the beta subunits. The chain is ATP synthase subunit beta from Synechococcus sp. (strain PCC 6716).